The primary structure comprises 338 residues: Fructose-1,6-bisphosphatase class 1 (338 aa).

The Mg(2+) site is built by glutamate 92, aspartate 115, leucine 117, and aspartate 118. Residues 118 to 121 (DGSS), asparagine 211, tyrosine 244, and lysine 274 contribute to the substrate site. Glutamate 280 contacts Mg(2+).

This sequence belongs to the FBPase class 1 family. Homotetramer. Mg(2+) serves as cofactor.

It localises to the cytoplasm. It carries out the reaction beta-D-fructose 1,6-bisphosphate + H2O = beta-D-fructose 6-phosphate + phosphate. It participates in carbohydrate biosynthesis; gluconeogenesis. This chain is Fructose-1,6-bisphosphatase class 1, found in Photobacterium profundum (strain SS9).